A 273-amino-acid chain; its full sequence is GTP cyclohydrolase MptA (273 aa).

It belongs to the GTP cyclohydrolase IV family. Homodimer. Requires Fe(2+) as cofactor.

It catalyses the reaction GTP + H2O = 7,8-dihydroneopterin 2',3'-cyclic phosphate + formate + diphosphate + H(+). Its pathway is cofactor biosynthesis; 5,6,7,8-tetrahydromethanopterin biosynthesis. Its function is as follows. Converts GTP to 7,8-dihydro-D-neopterin 2',3'-cyclic phosphate, the first intermediate in the biosynthesis of coenzyme methanopterin. The chain is GTP cyclohydrolase MptA from Picrophilus torridus (strain ATCC 700027 / DSM 9790 / JCM 10055 / NBRC 100828 / KAW 2/3).